A 329-amino-acid polypeptide reads, in one-letter code: Gamma-resorcylate decarboxylase (329 aa).

Glu8, His10, His167, and Asp290 together coordinate Zn(2+). Residue Asp290 is part of the active site.

This sequence belongs to the metallo-dependent hydrolases superfamily. ACMSD family. It depends on Zn(2+) as a cofactor.

The catalysed reaction is 2,6-dihydroxybenzoate + H(+) = resorcinol + CO2. Its pathway is aromatic compound metabolism. Its function is as follows. Involved in the gamma-resorcylate (2,6-dihydroxybenzoate) catabolism. Catalyzes the reversible decarboxylation of gamma-resorcylate to resorcinol. The chain is Gamma-resorcylate decarboxylase from Rhodococcus jostii (strain RHA1).